The chain runs to 426 residues: Enolase (426 aa).

Glutamine 163 is a (2R)-2-phosphoglycerate binding site. The active-site Proton donor is glutamate 205. Residues aspartate 242, glutamate 285, and aspartate 312 each coordinate Mg(2+). The (2R)-2-phosphoglycerate site is built by lysine 337, arginine 366, serine 367, and lysine 388. Lysine 337 (proton acceptor) is an active-site residue.

The protein belongs to the enolase family. It depends on Mg(2+) as a cofactor.

The protein resides in the cytoplasm. It is found in the secreted. The protein localises to the cell surface. The enzyme catalyses (2R)-2-phosphoglycerate = phosphoenolpyruvate + H2O. Its pathway is carbohydrate degradation; glycolysis; pyruvate from D-glyceraldehyde 3-phosphate: step 4/5. In terms of biological role, catalyzes the reversible conversion of 2-phosphoglycerate (2-PG) into phosphoenolpyruvate (PEP). It is essential for the degradation of carbohydrates via glycolysis. This chain is Enolase, found in Caulobacter vibrioides (strain ATCC 19089 / CIP 103742 / CB 15) (Caulobacter crescentus).